The chain runs to 289 residues: Protein SET (289 aa).

The disordered stretch occupies residues 1–45 (MAPKRQSAILPQPKKPRPAAAPKLEDKSASPGLPKGEKEQQEAIE). Alanine 2 is modified (n,N,N-trimethylalanine; by NTM1). Serine 7 bears the Phosphoserine mark. Residue proline 11 is modified to N6-acetyllysine. Lysine 15 is modified (phosphoserine). At lysine 23 the chain carries N6-acetyllysine. At lysine 23 the chain carries Phosphothreonine. Serine 28 is modified (phosphoserine). Residues 31-77 (PGLPKGEKEQQEAIEHIDEVQNEIDRLNEQASEEILKVEQKYNKLRQ) form a dimerization region. The span at 35-45 (KGEKEQQEAIE) shows a compositional bias: basic and acidic residues. Phosphoserine is present on serine 62. The residue at position 67 (lysine 67) is an N6-acetyllysine. An earmuff domain region spans residues 78 to 224 (PFFQKRSELI…ELGEVIKDDI (147 aa)). A Phosphotyrosine modification is found at tyrosine 145. Lysine 149 is subject to N6-acetyllysine. A Glycyl lysine isopeptide (Lys-Gly) (interchain with G-Cter in ubiquitin) cross-link involves residue lysine 153. Disordered regions lie at residues 157–206 (LNES…TWFT) and 235–289 (PDMD…GEDD). Residues 168–180 (TEIKWKSGKDLTK) show a composition bias toward basic and acidic residues. Lysine 171 is subject to N6-acetyllysine. Positions 236-289 (DMDDEEGEAEDDDDDDEEEEGLEDIDEEGDEDEGEEDDDEDEGEEGEEDEGEDD) are enriched in acidic residues.

Belongs to the nucleosome assembly protein (NAP) family. Headphone-shaped homodimer. Isoform 1 and isoform 2 interact directly with each other and with ANP32A within the tripartite INHAT (inhibitor of acetyltransferases) complex. Isoform 1 and isoform 2 interact also with histones. Isoform 2 is a omponent of the SET complex, composed of at least ANP32A, APEX1, HMGB2, NME1, SET and TREX1, but not NME2 or TREX2. Within this complex, directly interacts with ANP32A, NME1, HMGB2 and TREX1; the interaction with ANP32A is enhanced after cleavage. Interacts with APBB1, CHTOP, SETBP1, SGO1. In terms of processing, some glutamate residues are glycylated by TTLL8. This modification occurs exclusively on glutamate residues and results in a glycine chain on the gamma-carboxyl group. N-terminus of isoform 1 is methylated by METTL11A/NTM1. Mainly trimethylated. Post-translationally, cleaved after Lys-176 by GZMA. The cleavage inhibits its nucleosome assembly activity and disrupts the inhibition on NME1.

The protein resides in the cytoplasm. Its subcellular location is the cytosol. It is found in the endoplasmic reticulum. It localises to the nucleus. The protein localises to the nucleoplasm. Functionally, multitasking protein, involved in apoptosis, transcription, nucleosome assembly and histone chaperoning. Isoform 2 anti-apoptotic activity is mediated by inhibition of the GZMA-activated DNase, NME1. In the course of cytotoxic T-lymphocyte (CTL)-induced apoptosis, GZMA cleaves SET, disrupting its binding to NME1 and releasing NME1 inhibition. Isoform 1 and isoform 2 are potent inhibitors of protein phosphatase 2A. Isoform 1 and isoform 2 inhibit EP300/CREBBP and PCAF-mediated acetylation of histones (HAT) and nucleosomes, most probably by masking the accessibility of lysines of histones to the acetylases. The predominant target for inhibition is histone H4. HAT inhibition leads to silencing of HAT-dependent transcription and prevents active demethylation of DNA. Both isoforms stimulate DNA replication of the adenovirus genome complexed with viral core proteins; however, isoform 2 specific activity is higher. This chain is Protein SET (Set), found in Mus musculus (Mouse).